The following is a 591-amino-acid chain: Aspartate--tRNA(Asp/Asn) ligase (591 aa).

An L-aspartate-binding site is contributed by Glu170. Residues Gln194–Lys197 are aspartate. An L-aspartate-binding site is contributed by Arg216. ATP contacts are provided by residues Arg216–Glu218 and Gln225. His448 lines the L-aspartate pocket. Glu482 is an ATP binding site. Arg489 contacts L-aspartate. Gly534–Arg537 provides a ligand contact to ATP. Residues Gly559 to His591 form a disordered region. Residues Gln574–His591 show a composition bias toward basic and acidic residues.

This sequence belongs to the class-II aminoacyl-tRNA synthetase family. Type 1 subfamily. As to quaternary structure, homodimer.

It localises to the cytoplasm. It catalyses the reaction tRNA(Asx) + L-aspartate + ATP = L-aspartyl-tRNA(Asx) + AMP + diphosphate. Its function is as follows. Aspartyl-tRNA synthetase with relaxed tRNA specificity since it is able to aspartylate not only its cognate tRNA(Asp) but also tRNA(Asn). Reaction proceeds in two steps: L-aspartate is first activated by ATP to form Asp-AMP and then transferred to the acceptor end of tRNA(Asp/Asn). This is Aspartate--tRNA(Asp/Asn) ligase from Mycobacterium avium (strain 104).